Here is a 59-residue protein sequence, read N- to C-terminus: Large ribosomal subunit protein uL30 (59 aa).

This sequence belongs to the universal ribosomal protein uL30 family. In terms of assembly, part of the 50S ribosomal subunit.

The protein is Large ribosomal subunit protein uL30 of Citrifermentans bemidjiense (strain ATCC BAA-1014 / DSM 16622 / JCM 12645 / Bem) (Geobacter bemidjiensis).